The chain runs to 133 residues: Holo-[acyl-carrier-protein] synthase (133 aa).

Residues Asp-8 and Glu-57 each contribute to the Mg(2+) site.

The protein belongs to the P-Pant transferase superfamily. AcpS family. The cofactor is Mg(2+).

The protein resides in the cytoplasm. It carries out the reaction apo-[ACP] + CoA = holo-[ACP] + adenosine 3',5'-bisphosphate + H(+). Its function is as follows. Transfers the 4'-phosphopantetheine moiety from coenzyme A to a Ser of acyl-carrier-protein. The polypeptide is Holo-[acyl-carrier-protein] synthase (Bartonella henselae (strain ATCC 49882 / DSM 28221 / CCUG 30454 / Houston 1) (Rochalimaea henselae)).